The primary structure comprises 339 residues: Type IV secretion system protein PtlH homolog (339 aa).

It belongs to the GSP E family.

This chain is Type IV secretion system protein PtlH homolog (ptlH), found in Bordetella bronchiseptica (strain ATCC BAA-588 / NCTC 13252 / RB50) (Alcaligenes bronchisepticus).